Reading from the N-terminus, the 71-residue chain is UPF0435 protein SERP1418 (71 aa).

Belongs to the UPF0435 family.

The protein is UPF0435 protein SERP1418 of Staphylococcus epidermidis (strain ATCC 35984 / DSM 28319 / BCRC 17069 / CCUG 31568 / BM 3577 / RP62A).